Reading from the N-terminus, the 250-residue chain is MANLRVEVISLFPEMFSAISEYGITSRAVKQGLLQLTCWNPRDYTTDRHHTVDDRPFGGGPGMVMKIKPLEDALVQARNAAGEGAKVIYLSPQGRQLNQSAVRELANEDALILIAGRYEGIDERFIDAHVDEEWSIGDYVLSGGELPAMVLIDAVTRLLPGALGHVDSAEEDSFTDGLLDCPHYTRPEVYADQRVPDVLLSGNHAHIRRWRLQQSLGRTYERRADLLESRSLSGEEKKLLEEYLRERDDS.

S-adenosyl-L-methionine is bound by residues glycine 116 and 136–141 (IGDYVL).

Belongs to the RNA methyltransferase TrmD family. Homodimer.

Its subcellular location is the cytoplasm. It carries out the reaction guanosine(37) in tRNA + S-adenosyl-L-methionine = N(1)-methylguanosine(37) in tRNA + S-adenosyl-L-homocysteine + H(+). Specifically methylates guanosine-37 in various tRNAs. This chain is tRNA (guanine-N(1)-)-methyltransferase, found in Pseudomonas fluorescens (strain ATCC BAA-477 / NRRL B-23932 / Pf-5).